The primary structure comprises 371 residues: MAWTKYQLFLAGLMLVTGSINTLSAKWADNFMAEGCGGSKEHSFQHPFLQAVGMFLGEFSCLAAFYLLRCRAAGQSDSSVDPQQPFNPLLFLPPALCDMTGTSLMYVALNMTSASSFQMLRGAVIIFTGLFSVAFLGRRLVLSQWLGILATIAGLVVVGLADLLSKHDSQHKLSEVITGDLLIIMAQIIVAIQMVLEEKFVYKHNVHPLRAVGTEGLFGFVILSLLLVPMYYIPAGSFSGNPRGTLEDALDAFCQVGQQPLIAVALLGNISSIAFFNFAGISVTKELSATTRMVLDSLRTVVIWALSLALGWEAFHALQILGFLILLIGTALYNGLHRPLLGRLSRGRPLAEESEQERLLGGTRTPINDAS.

Residues 1–18 (MAWTKYQLFLAGLMLVTG) form the signal peptide. 2 helical membrane passes run 48 to 68 (FLQAVGMFLGEFSCLAAFYLL) and 89 to 109 (LLFLPPALCDMTGTSLMYVAL). The EamA domain occupies 104–160 (LMYVALNMTSASSFQMLRGAVIIFTGLFSVAFLGRRLVLSQWLGILATIAGLVVVGL). The N-linked (GlcNAc...) asparagine glycan is linked to Asn-110. Transmembrane regions (helical) follow at residues 117-137 (FQMLRGAVIIFTGLFSVAFLG), 140-160 (LVLSQWLGILATIAGLVVVGL), 176-196 (VITGDLLIIMAQIIVAIQMVL), 216-236 (GLFGFVILSLLLVPMYYIPAG), 261-281 (LIAVALLGNISSIAFFNFAGI), 295-312 (LDSLRTVVIWALSLALGW), and 317-336 (ALQILGFLILLIGTALYNGL). Positions 352 to 371 (EESEQERLLGGTRTPINDAS) are disordered. A Phosphothreonine modification is found at Thr-365.

The protein belongs to the SLC35F solute transporter family. Interacts with SLC25A5. In terms of tissue distribution, expressed in pancreatic ductal adenocarcinoma (PDAC) (at protein level). Strongly expressed in prostate and thyroid. Weakly expressed in lung, heart, liver and kidney.

Its subcellular location is the mitochondrion. It localises to the lysosome membrane. Involved in the maintenance of mitochondrial membrane potential in pancreatic ductal adenocarcinoma (PDAC) cells. Promotes pancreatic ductal adenocarcinoma (PDAC) cell growth. May play a role as a nucleotide-sugar transporter. The chain is Solute carrier family 35 member F6 (SLC35F6) from Homo sapiens (Human).